Consider the following 428-residue polypeptide: Adenylosuccinate synthetase (428 aa).

GTP-binding positions include Gly12–Lys18 and Gly40–Thr42. The active-site Proton acceptor is the Asp13. Mg(2+) is bound by residues Asp13 and Gly40. Residues Asp13 to Lys16, Asn38 to His41, Thr128, Arg142, Gln223, Thr238, and Arg302 each bind IMP. His41 (proton donor) is an active-site residue. Thr298–Arg304 is a binding site for substrate. Residues Arg304, Ser330–Asp332, and Ser412–Gly414 each bind GTP.

The protein belongs to the adenylosuccinate synthetase family. Homodimer. Mg(2+) is required as a cofactor.

The protein resides in the cytoplasm. The enzyme catalyses IMP + L-aspartate + GTP = N(6)-(1,2-dicarboxyethyl)-AMP + GDP + phosphate + 2 H(+). It functions in the pathway purine metabolism; AMP biosynthesis via de novo pathway; AMP from IMP: step 1/2. Plays an important role in the de novo pathway of purine nucleotide biosynthesis. Catalyzes the first committed step in the biosynthesis of AMP from IMP. The chain is Adenylosuccinate synthetase from Streptococcus pneumoniae serotype 2 (strain D39 / NCTC 7466).